The primary structure comprises 159 residues: Aspartate carbamoyltransferase regulatory chain (159 aa).

The Zn(2+) site is built by C113, C118, C142, and C145.

Belongs to the PyrI family. In terms of assembly, contains catalytic and regulatory chains. The cofactor is Zn(2+).

Functionally, involved in allosteric regulation of aspartate carbamoyltransferase. This Saccharolobus islandicus (strain Y.N.15.51 / Yellowstone #2) (Sulfolobus islandicus) protein is Aspartate carbamoyltransferase regulatory chain.